The chain runs to 449 residues: Protein trichome birefringence-like 35 (449 aa).

Residues 12–29 (LPLAGLLFILVVTFMILF) form a helical; Signal-anchor for type II membrane protein membrane-spanning segment. Positions 185–187 (GDS) match the GDS motif motif. The DCXHWCLPGXXDXWN motif signature appears at 428 to 442 (DCTHWCVPGVPDVWN).

Belongs to the PC-esterase family. TBL subfamily.

It localises to the membrane. Functionally, may act as a bridging protein that binds pectin and other cell wall polysaccharides. Probably involved in maintaining esterification of pectins. May be involved in the specific O-acetylation of cell wall polymers. In Arabidopsis thaliana (Mouse-ear cress), this protein is Protein trichome birefringence-like 35 (TBL35).